The following is a 42-amino-acid chain: Photosystem II reaction center protein J (42 aa).

A helical transmembrane segment spans residues I10 to F30.

The protein belongs to the PsbJ family. As to quaternary structure, PSII is composed of 1 copy each of membrane proteins PsbA, PsbB, PsbC, PsbD, PsbE, PsbF, PsbH, PsbI, PsbJ, PsbK, PsbL, PsbM, PsbT, PsbX, PsbY, PsbZ, Psb30/Ycf12, at least 3 peripheral proteins of the oxygen-evolving complex and a large number of cofactors. It forms dimeric complexes.

The protein resides in the plastid. It is found in the chloroplast thylakoid membrane. In terms of biological role, one of the components of the core complex of photosystem II (PSII). PSII is a light-driven water:plastoquinone oxidoreductase that uses light energy to abstract electrons from H(2)O, generating O(2) and a proton gradient subsequently used for ATP formation. It consists of a core antenna complex that captures photons, and an electron transfer chain that converts photonic excitation into a charge separation. The sequence is that of Photosystem II reaction center protein J from Staurastrum punctulatum (Green alga).